A 261-amino-acid chain; its full sequence is Cytochrome c oxidase subunit 3 (261 aa).

At 1–15 (MTHQTHAYHMVNPSP) the chain is on the mitochondrial matrix side. The chain crosses the membrane as a helical span at residues 16-34 (WPLTGALSALLMTFGLIMW). Topologically, residues 35–40 (FHFNST) are mitochondrial intermembrane. The helical transmembrane segment at 41-66 (ALLMLGLTTNMLTMYQWWRDIIREST) threads the bilayer. The Mitochondrial matrix portion of the chain corresponds to 67-72 (FQGHHT). A helical transmembrane segment spans residues 73 to 105 (PVVQKGLRYGMILFIISEVLFFTGFFWAFYHSS). Residues 106-128 (LAPTPELGGCWPPTGIHPLNPLE) lie on the Mitochondrial intermembrane side of the membrane. A helical membrane pass occupies residues 129 to 152 (VPLLNTSVLLASGVSITWAHHSLM). Over 153-155 (EGH) the chain is Mitochondrial matrix. Residues 156–183 (RNHMLQALFITIALGVYFTLLQASEYYE) traverse the membrane as a helical segment. The Mitochondrial intermembrane portion of the chain corresponds to 184–190 (APFTISD). The chain crosses the membrane as a helical span at residues 191-223 (GVYGSTFFVATGFHGLHVIIGSTFLIVCFFRQL). At 224–232 (KFHFTSSHH) the chain is on the mitochondrial matrix side. The helical transmembrane segment at 233 to 256 (FGFEAAAWYWHFVDVVWLFLYVSI) threads the bilayer. Topologically, residues 257 to 261 (YWWGS) are mitochondrial intermembrane.

This sequence belongs to the cytochrome c oxidase subunit 3 family. As to quaternary structure, component of the cytochrome c oxidase (complex IV, CIV), a multisubunit enzyme composed of 14 subunits. The complex is composed of a catalytic core of 3 subunits MT-CO1, MT-CO2 and MT-CO3, encoded in the mitochondrial DNA, and 11 supernumerary subunits COX4I, COX5A, COX5B, COX6A, COX6B, COX6C, COX7A, COX7B, COX7C, COX8 and NDUFA4, which are encoded in the nuclear genome. The complex exists as a monomer or a dimer and forms supercomplexes (SCs) in the inner mitochondrial membrane with NADH-ubiquinone oxidoreductase (complex I, CI) and ubiquinol-cytochrome c oxidoreductase (cytochrome b-c1 complex, complex III, CIII), resulting in different assemblies (supercomplex SCI(1)III(2)IV(1) and megacomplex MCI(2)III(2)IV(2)).

The protein resides in the mitochondrion inner membrane. It catalyses the reaction 4 Fe(II)-[cytochrome c] + O2 + 8 H(+)(in) = 4 Fe(III)-[cytochrome c] + 2 H2O + 4 H(+)(out). Functionally, component of the cytochrome c oxidase, the last enzyme in the mitochondrial electron transport chain which drives oxidative phosphorylation. The respiratory chain contains 3 multisubunit complexes succinate dehydrogenase (complex II, CII), ubiquinol-cytochrome c oxidoreductase (cytochrome b-c1 complex, complex III, CIII) and cytochrome c oxidase (complex IV, CIV), that cooperate to transfer electrons derived from NADH and succinate to molecular oxygen, creating an electrochemical gradient over the inner membrane that drives transmembrane transport and the ATP synthase. Cytochrome c oxidase is the component of the respiratory chain that catalyzes the reduction of oxygen to water. Electrons originating from reduced cytochrome c in the intermembrane space (IMS) are transferred via the dinuclear copper A center (CU(A)) of subunit 2 and heme A of subunit 1 to the active site in subunit 1, a binuclear center (BNC) formed by heme A3 and copper B (CU(B)). The BNC reduces molecular oxygen to 2 water molecules using 4 electrons from cytochrome c in the IMS and 4 protons from the mitochondrial matrix. This is Cytochrome c oxidase subunit 3 (MT-CO3) from Tragelaphus oryx (Eland).